The primary structure comprises 134 residues: Loki profilin-2 (134 aa).

A loki loop region spans residues 55 to 62 (LALGEKGI).

The protein belongs to the Asgard profilin family.

It localises to the cytoplasm. It is found in the cytoskeleton. With respect to regulation, inhibition of rabbit actin polymerization is reduced by phosphatidylinositol-(4,5)-P2(1,2-dipalmitoyl), a soluble form of the phospholipid phosphatidylinositol, suggesting an unknown lipid might regulate actin-profilin interaction in vivo. Its function is as follows. Binds to actin and affects the structure of the cytoskeleton. At high concentrations inhibits spontaneous rabbit actin nucleation. This strongly suggests this archaea has a profilin-regulated actin system, and actin-type genes can be identified in this organism. The sequence is that of Loki profilin-2 from Lokiarchaeum sp. (strain GC14_75).